A 424-amino-acid chain; its full sequence is UPF0597 protein SO_1403 (424 aa).

It belongs to the UPF0597 family.

The polypeptide is UPF0597 protein SO_1403 (Shewanella oneidensis (strain ATCC 700550 / JCM 31522 / CIP 106686 / LMG 19005 / NCIMB 14063 / MR-1)).